The chain runs to 133 residues: Small ribosomal subunit protein uS8 (133 aa).

It belongs to the universal ribosomal protein uS8 family. Part of the 30S ribosomal subunit. Contacts proteins S5 and S12.

One of the primary rRNA binding proteins, it binds directly to 16S rRNA central domain where it helps coordinate assembly of the platform of the 30S subunit. The polypeptide is Small ribosomal subunit protein uS8 (Prochlorococcus marinus subsp. pastoris (strain CCMP1986 / NIES-2087 / MED4)).